The chain runs to 167 residues: ATP synthase subunit b (167 aa).

A helical membrane pass occupies residues 10 to 30 (TFFFQLANTLIMFLILKHFLF).

Belongs to the ATPase B chain family. F-type ATPases have 2 components, F(1) - the catalytic core - and F(0) - the membrane proton channel. F(1) has five subunits: alpha(3), beta(3), gamma(1), delta(1), epsilon(1). F(0) has three main subunits: a(1), b(2) and c(10-14). The alpha and beta chains form an alternating ring which encloses part of the gamma chain. F(1) is attached to F(0) by a central stalk formed by the gamma and epsilon chains, while a peripheral stalk is formed by the delta and b chains.

It is found in the cell membrane. F(1)F(0) ATP synthase produces ATP from ADP in the presence of a proton or sodium gradient. F-type ATPases consist of two structural domains, F(1) containing the extramembraneous catalytic core and F(0) containing the membrane proton channel, linked together by a central stalk and a peripheral stalk. During catalysis, ATP synthesis in the catalytic domain of F(1) is coupled via a rotary mechanism of the central stalk subunits to proton translocation. In terms of biological role, component of the F(0) channel, it forms part of the peripheral stalk, linking F(1) to F(0). The chain is ATP synthase subunit b from Alkaliphilus oremlandii (strain OhILAs) (Clostridium oremlandii (strain OhILAs)).